We begin with the raw amino-acid sequence, 427 residues long: Trigger factor (427 aa).

The PPIase FKBP-type domain maps to 163 to 248 (GDIVVIDFAG…LKEIKRKELA (86 aa)).

This sequence belongs to the FKBP-type PPIase family. Tig subfamily.

It localises to the cytoplasm. The enzyme catalyses [protein]-peptidylproline (omega=180) = [protein]-peptidylproline (omega=0). Functionally, involved in protein export. Acts as a chaperone by maintaining the newly synthesized protein in an open conformation. Functions as a peptidyl-prolyl cis-trans isomerase. The polypeptide is Trigger factor (Carboxydothermus hydrogenoformans (strain ATCC BAA-161 / DSM 6008 / Z-2901)).